Consider the following 465-residue polypeptide: GTPase Der (465 aa).

2 consecutive EngA-type G domains span residues 3-166 and 184-358; these read FLVA…LNEY and IHFS…ACAN. GTP contacts are provided by residues 9 to 16, 56 to 60, 118 to 121, 190 to 197, 237 to 241, and 302 to 305; these read GRANVGKS, DTGGI, NKVD, GRPNVGKS, DTAGV, and NKWD. The 85-residue stretch at 359-443 folds into the KH-like domain; the sequence is KKITTADATR…PIVFEFKQSE (85 aa). The disordered stretch occupies residues 446–465; the sequence is FADRKNKRSKDEGSKSKKVK.

The protein belongs to the TRAFAC class TrmE-Era-EngA-EngB-Septin-like GTPase superfamily. EngA (Der) GTPase family. As to quaternary structure, associates with the 50S ribosomal subunit.

In terms of biological role, GTPase that plays an essential role in the late steps of ribosome biogenesis. This is GTPase Der from Francisella tularensis subsp. holarctica (strain FTNF002-00 / FTA).